Reading from the N-terminus, the 241-residue chain is Pyridoxine 5'-phosphate synthase (241 aa).

A 3-amino-2-oxopropyl phosphate-binding site is contributed by N7. D9–H10 lines the 1-deoxy-D-xylulose 5-phosphate pocket. 3-amino-2-oxopropyl phosphate is bound at residue R18. H43 serves as the catalytic Proton acceptor. Residues R45 and H50 each coordinate 1-deoxy-D-xylulose 5-phosphate. E70 functions as the Proton acceptor in the catalytic mechanism. T100 contributes to the 1-deoxy-D-xylulose 5-phosphate binding site. H190 functions as the Proton donor in the catalytic mechanism. 3-amino-2-oxopropyl phosphate is bound by residues G191 and G212–H213.

Belongs to the PNP synthase family. In terms of assembly, homooctamer; tetramer of dimers.

It is found in the cytoplasm. The catalysed reaction is 3-amino-2-oxopropyl phosphate + 1-deoxy-D-xylulose 5-phosphate = pyridoxine 5'-phosphate + phosphate + 2 H2O + H(+). Its pathway is cofactor biosynthesis; pyridoxine 5'-phosphate biosynthesis; pyridoxine 5'-phosphate from D-erythrose 4-phosphate: step 5/5. Its function is as follows. Catalyzes the complicated ring closure reaction between the two acyclic compounds 1-deoxy-D-xylulose-5-phosphate (DXP) and 3-amino-2-oxopropyl phosphate (1-amino-acetone-3-phosphate or AAP) to form pyridoxine 5'-phosphate (PNP) and inorganic phosphate. The chain is Pyridoxine 5'-phosphate synthase from Bordetella avium (strain 197N).